The sequence spans 425 residues: WD repeat-containing protein JIP5 (425 aa).

WD repeat units lie at residues 9 to 48 (QLDS…SDDS), 71 to 110 (RHKG…VTAK), 117 to 158 (LANG…AKSA), 219 to 262 (ELLS…DQDE), and 321 to 358 (LRQE…DVPE). The disordered stretch occupies residues 354-425 (QDVPEDDEDE…HGILHFSGLA (72 aa)). Composition is skewed to acidic residues over residues 356–368 (VPED…EEEA) and 378–396 (SDED…EDDE). Residues 399-414 (QKRKKRRKGKGGKQAK) show a composition bias toward basic residues.

This sequence belongs to the WD repeat WDR55 family.

It localises to the nucleus. Its subcellular location is the nucleolus. This Phaeosphaeria nodorum (strain SN15 / ATCC MYA-4574 / FGSC 10173) (Glume blotch fungus) protein is WD repeat-containing protein JIP5 (JIP5).